The primary structure comprises 315 residues: MENFPIINLEKLNGDERANTMEMIKDACENWGFFELVNHGIPHEVMDTVEKMTKGHYKKCMEQRFKELVASKGLEAVQAEVTDLDWESTFFLRHLPTSNISQVPDLDEEYREVMRDFAKRLEKLAEELLDLLCENLGLEKGYLKNAFYGSKGPNFGTKVSNYPPCPKPDLIKGLRAHTDAGGIILLFQDDKVSGLQLLKDEQWIDVPPMRHSIVVNLGDQLEVITNGKYKSVLHRVIAQTDGTRMSLASFYNPGSDAVIYPAKTLVEKEAEESTQVYPKFVFDDYMKLYAGLKFQAKEPRFEAMKAMESDPIASA.

The 101-residue stretch at 153–253 (PNFGTKVSNY…RMSLASFYNP (101 aa)) folds into the Fe2OG dioxygenase domain. Fe cation-binding residues include His177, Asp179, and His234.

The protein belongs to the iron/ascorbate-dependent oxidoreductase family. The cofactor is Fe cation. In terms of tissue distribution, predominantly expressed in the petals and the stigma and style.

The enzyme catalyses 1-aminocyclopropane-1-carboxylate + L-ascorbate + O2 = ethene + L-dehydroascorbate + hydrogen cyanide + CO2 + 2 H2O. The protein operates within alkene biosynthesis; ethylene biosynthesis via S-adenosyl-L-methionine; ethylene from S-adenosyl-L-methionine: step 2/2. The polypeptide is 1-aminocyclopropane-1-carboxylate oxidase 1 (ACO1) (Solanum lycopersicum (Tomato)).